The chain runs to 197 residues: Superoxide dismutase [Fe] (197 aa).

Residues His26, His75, Asp157, and His161 each coordinate Fe cation.

The protein belongs to the iron/manganese superoxide dismutase family. In terms of assembly, homotetramer. The cofactor is Fe cation.

It carries out the reaction 2 superoxide + 2 H(+) = H2O2 + O2. Its function is as follows. Destroys superoxide anion radicals which are normally produced within the cells and which are toxic to biological systems. The sequence is that of Superoxide dismutase [Fe] from Cupriavidus metallidurans (strain ATCC 43123 / DSM 2839 / NBRC 102507 / CH34) (Ralstonia metallidurans).